The primary structure comprises 392 residues: Major outer membrane protein P.IA (392 aa).

The signal sequence occupies residues 1–19 (MRKKLTALVLSALPLAAVA).

The protein belongs to the Gram-negative porin family. As to quaternary structure, homotrimer.

The protein localises to the cell outer membrane. Its function is as follows. Serves as a slightly cation selective porin. Major antigen on the gonococcal cell surface and it may have pathogenic properties in addition to its porin activity. This Neisseria meningitidis serogroup B (strain ATCC BAA-335 / MC58) protein is Major outer membrane protein P.IA (porA).